Here is a 358-residue protein sequence, read N- to C-terminus: Peptide chain release factor 1 (358 aa).

Q233 is subject to N5-methylglutamine.

The protein belongs to the prokaryotic/mitochondrial release factor family. Post-translationally, methylated by PrmC. Methylation increases the termination efficiency of RF1.

The protein localises to the cytoplasm. Its function is as follows. Peptide chain release factor 1 directs the termination of translation in response to the peptide chain termination codons UAG and UAA. The chain is Peptide chain release factor 1 from Clostridium botulinum (strain Loch Maree / Type A3).